Reading from the N-terminus, the 279-residue chain is Movement protein (279 aa).

The tract at residues 246 to 279 is disordered; that stretch reads SESEELNVESPPAAIGSSSASRSEAFRPQVVNGL. Positions 254-268 are enriched in low complexity; that stretch reads ESPPAAIGSSSASRS.

The protein belongs to the cucumovirus movement protein family.

It localises to the host cell junction. The protein localises to the host plasmodesma. Functionally, transports viral genome to neighboring plant cells directly through plasmosdesmata, without any budding. The movement protein allows efficient cell to cell propagation, by bypassing the host cell wall barrier. Acts by forming a tubular structure at the host plasmodesmata, enlarging it enough to allow free passage of virion capsids. In Cucumber mosaic virus (strain N) (CMV), this protein is Movement protein.